Consider the following 429-residue polypeptide: Trigger factor (429 aa).

A PPIase FKBP-type domain is found at 161–246; sequence EDRVTIDFTG…LKKVEERELP (86 aa).

It belongs to the FKBP-type PPIase family. Tig subfamily. As to quaternary structure, homodimer and monomer. In vivo most of the ribosomes are in complex with monomeric TF. Uncomplexed TF, however, is in a monomer-dimer equilibrium with approximately two thirds of TF existing in a dimeric state.

The protein localises to the cytoplasm. It catalyses the reaction [protein]-peptidylproline (omega=180) = [protein]-peptidylproline (omega=0). Its function is as follows. Involved in protein export. Acts as a chaperone by maintaining the newly synthesized protein in an open conformation. Functions as a peptidyl-prolyl cis-trans isomerase. This chain is Trigger factor, found in Escherichia coli O45:K1 (strain S88 / ExPEC).